The following is a 465-amino-acid chain: 2-methylcitrate synthase, mitochondrial (465 aa).

Positions 72 and 190 each coordinate CoA. Residue His265 coordinates oxaloacetate. CoA is bound at residue Leu300. His301 is an active-site residue. CoA is bound by residues Val342, Gly344, and Tyr345. His347 and Arg356 together coordinate oxaloacetate. His347 is an active-site residue. Positions 394, 395, and 400 each coordinate CoA. Residue Asp402 is part of the active site. Residues Arg428 and Arg448 each contribute to the oxaloacetate site.

Belongs to the citrate synthase family. Homodimer.

Its subcellular location is the mitochondrion matrix. The enzyme catalyses propanoyl-CoA + oxaloacetate + H2O = (2S,3S)-2-methylcitrate + CoA + H(+). It carries out the reaction oxaloacetate + acetyl-CoA + H2O = citrate + CoA + H(+). The protein operates within organic acid metabolism; propanoate degradation. Activity is inhibited by p-chloromercuribenzoate (pCMB), monoiodoacetamide, H(2)O(2), ATP, ADP, NADH, NADPH, Hg(2+) and Zn(2+). Its function is as follows. Component of the methylcitrate cycle that catalyzes the synthesis of (2S,3S)-2-methylcitrate from propionyl-CoA and oxaloacetate. Plays an important role in detoxification of propionyl-CoA, an inhibitor of both primary and secondary metabolism. Also has citrate synthase activity using as substrates acetyl-CoA and oxaloacetate. In Yarrowia lipolytica (strain CLIB 122 / E 150) (Yeast), this protein is 2-methylcitrate synthase, mitochondrial.